Here is a 299-residue protein sequence, read N- to C-terminus: ATP phosphoribosyltransferase (299 aa).

The protein belongs to the ATP phosphoribosyltransferase family. Long subfamily. Equilibrium between an active dimeric form, an inactive hexameric form and higher aggregates. Interconversion between the various forms is largely reversible and is influenced by the natural substrates and inhibitors of the enzyme. It depends on Mg(2+) as a cofactor.

Its subcellular location is the cytoplasm. It catalyses the reaction 1-(5-phospho-beta-D-ribosyl)-ATP + diphosphate = 5-phospho-alpha-D-ribose 1-diphosphate + ATP. Its pathway is amino-acid biosynthesis; L-histidine biosynthesis; L-histidine from 5-phospho-alpha-D-ribose 1-diphosphate: step 1/9. Feedback inhibited by histidine. Functionally, catalyzes the condensation of ATP and 5-phosphoribose 1-diphosphate to form N'-(5'-phosphoribosyl)-ATP (PR-ATP). Has a crucial role in the pathway because the rate of histidine biosynthesis seems to be controlled primarily by regulation of HisG enzymatic activity. This chain is ATP phosphoribosyltransferase, found in Escherichia coli O17:K52:H18 (strain UMN026 / ExPEC).